The primary structure comprises 348 residues: Xaa-Pro dipeptidase (348 aa).

Residues D209, D220, H284, E313, and E327 each contribute to the Co(2+) site.

This sequence belongs to the peptidase M24B family. Archaeal-type prolidase subfamily. In terms of assembly, homodimer. Requires Co(2+) as cofactor. Mn(2+) serves as cofactor.

The protein localises to the cytoplasm. It carries out the reaction Xaa-L-Pro dipeptide + H2O = an L-alpha-amino acid + L-proline. Its function is as follows. Splits dipeptides with a prolyl in the C-terminal position and a nonpolar amino acid at the N-terminal position. This Pyrococcus furiosus (strain ATCC 43587 / DSM 3638 / JCM 8422 / Vc1) protein is Xaa-Pro dipeptidase (pepQ).